Reading from the N-terminus, the 60-residue chain is MGVPKRKTSKGRRDKRRAHLALSGPALAKCPQCNEMRLPHRVCPACGYYRDRAVLEFEEE.

Basic residues predominate over residues 1–19; that stretch reads MGVPKRKTSKGRRDKRRAH. The disordered stretch occupies residues 1–20; sequence MGVPKRKTSKGRRDKRRAHL.

It belongs to the bacterial ribosomal protein bL32 family.

This Syntrophobacter fumaroxidans (strain DSM 10017 / MPOB) protein is Large ribosomal subunit protein bL32.